The chain runs to 175 residues: Cyclic pyranopterin monophosphate synthase (175 aa).

Substrate-binding positions include 78–80 (LCH) and 125–126 (ME). The active site involves Asp140.

This sequence belongs to the MoaC family. Homohexamer; trimer of dimers.

The catalysed reaction is (8S)-3',8-cyclo-7,8-dihydroguanosine 5'-triphosphate = cyclic pyranopterin phosphate + diphosphate. The protein operates within cofactor biosynthesis; molybdopterin biosynthesis. Functionally, catalyzes the conversion of (8S)-3',8-cyclo-7,8-dihydroguanosine 5'-triphosphate to cyclic pyranopterin monophosphate (cPMP). The protein is Cyclic pyranopterin monophosphate synthase of Rhodopirellula baltica (strain DSM 10527 / NCIMB 13988 / SH1).